The chain runs to 118 residues: Large ribosomal subunit protein uL18 (118 aa).

The protein belongs to the universal ribosomal protein uL18 family. As to quaternary structure, part of the 50S ribosomal subunit; part of the 5S rRNA/L5/L18/L25 subcomplex. Contacts the 5S and 23S rRNAs.

This is one of the proteins that bind and probably mediate the attachment of the 5S RNA into the large ribosomal subunit, where it forms part of the central protuberance. This chain is Large ribosomal subunit protein uL18, found in Myxococcus xanthus (strain DK1622).